We begin with the raw amino-acid sequence, 71 residues long: Small ribosomal subunit protein eS17 (71 aa).

The protein belongs to the eukaryotic ribosomal protein eS17 family.

The polypeptide is Small ribosomal subunit protein eS17 (Pyrobaculum islandicum (strain DSM 4184 / JCM 9189 / GEO3)).